The following is a 512-amino-acid chain: Apolipoprotein N-acyltransferase (512 aa).

A run of 6 helical transmembrane segments spans residues 5–25, 56–76, 92–112, 118–138, 168–188, and 195–215; these read LDKY…FAAA, FAVS…FYWI, VPLT…CFWL, LPRG…TEFA, LGGI…LVLA, and SGKR…GYTA. The region spanning 233–477 is the CN hydrolase domain; it reads LQGNIDQTLK…ETVLEGHIKG (245 aa). The active-site Proton acceptor is the Glu271. Lys337 is a catalytic residue. Cys389 serves as the catalytic Nucleophile. The helical transmembrane segment at 487 to 507 threads the bilayer; it reads TGSSWWLMGILALAALILFIF.

It belongs to the CN hydrolase family. Apolipoprotein N-acyltransferase subfamily.

The protein resides in the cell inner membrane. It carries out the reaction N-terminal S-1,2-diacyl-sn-glyceryl-L-cysteinyl-[lipoprotein] + a glycerophospholipid = N-acyl-S-1,2-diacyl-sn-glyceryl-L-cysteinyl-[lipoprotein] + a 2-acyl-sn-glycero-3-phospholipid + H(+). It functions in the pathway protein modification; lipoprotein biosynthesis (N-acyl transfer). Functionally, catalyzes the phospholipid dependent N-acylation of the N-terminal cysteine of apolipoprotein, the last step in lipoprotein maturation. The polypeptide is Apolipoprotein N-acyltransferase (Neisseria meningitidis serogroup B (strain ATCC BAA-335 / MC58)).